Reading from the N-terminus, the 178-residue chain is Small ribosomal subunit protein uS7c (178 aa).

Basic and acidic residues predominate over residues 137-146 (QKKEEIEKSK). Residues 137–178 (QKKEEIEKSKSPVNNNKKFISKNKKSKNKKQKKRLKRKKNIY) form a disordered region. The span at 155 to 178 (FISKNKKSKNKKQKKRLKRKKNIY) shows a compositional bias: basic residues.

Belongs to the universal ribosomal protein uS7 family. As to quaternary structure, part of the 30S ribosomal subunit.

The protein resides in the plastid. Functionally, one of the primary rRNA binding proteins, it binds directly to 16S rRNA where it nucleates assembly of the head domain of the 30S subunit. In Euglena longa (Euglenophycean alga), this protein is Small ribosomal subunit protein uS7c (rps7).